The primary structure comprises 362 residues: Chorismate synthase (362 aa).

The tract at residues 39-59 (ADLQGDLDRRKPGTSRYTTPR) is disordered. Residues Arg-48 and Arg-54 each coordinate NADP(+). FMN is bound by residues 125-127 (RSS), 238-239 (NA), Gly-278, 293-297 (KPTSS), and Arg-319.

This sequence belongs to the chorismate synthase family. As to quaternary structure, homotetramer. Requires FMNH2 as cofactor.

It carries out the reaction 5-O-(1-carboxyvinyl)-3-phosphoshikimate = chorismate + phosphate. It participates in metabolic intermediate biosynthesis; chorismate biosynthesis; chorismate from D-erythrose 4-phosphate and phosphoenolpyruvate: step 7/7. Its function is as follows. Catalyzes the anti-1,4-elimination of the C-3 phosphate and the C-6 proR hydrogen from 5-enolpyruvylshikimate-3-phosphate (EPSP) to yield chorismate, which is the branch point compound that serves as the starting substrate for the three terminal pathways of aromatic amino acid biosynthesis. This reaction introduces a second double bond into the aromatic ring system. In Aeromonas hydrophila subsp. hydrophila (strain ATCC 7966 / DSM 30187 / BCRC 13018 / CCUG 14551 / JCM 1027 / KCTC 2358 / NCIMB 9240 / NCTC 8049), this protein is Chorismate synthase.